Consider the following 190-residue polypeptide: FUN14 domain-containing protein 2 (190 aa).

Residues 1 to 13 (METSTQRTGSHLA) are compositionally biased toward polar residues. The interval 1–31 (METSTQRTGSHLAQTAAARHSASSRGEAARV) is disordered. Topologically, residues 1–81 (METSTQRTGS…GQESGPSAEK (81 aa)) are cytoplasmic. 2 positions are modified to phosphoserine: Ser-10 and Ser-54. The chain crosses the membrane as a helical span at residues 82–102 (YSVATQLLIGGVTGWCTGFIF). Over 103–108 (QKVGKL) the chain is Mitochondrial intermembrane. The helical transmembrane segment at 109 to 129 (AATAVGGGFFLLQLANHTGYI) threads the bilayer. Residues 130–165 (KVDWQRVEKDMKKAKEQLKIRKSNQIPTEVKSKAEE) lie on the Cytoplasmic side of the membrane. At Ser-152 the chain carries Phosphoserine. Residues 166–186 (VVSFVKKNVLVTGGFFGGFLL) form a helical membrane-spanning segment. At 187-190 (GMAS) the chain is on the mitochondrial intermembrane side.

It belongs to the FUN14 family.

The protein resides in the mitochondrion outer membrane. It localises to the nucleus. Its function is as follows. Binds directly and specifically 1,2-Diacyl-sn-glycero-3-phospho-(1'-myo-inositol-3',4',5'-bisphosphate) (PIP3) leading to the recruitment of PIP3 to mitochondria and may play a role in the regulation of the platelet activation via AKT/GSK3B/cGMP signaling pathways. May act as transcription factor that regulates SREBP1 (isoform SREBP-1C) expression in order to modulate triglyceride (TG) homeostasis in hepatocytes. The protein is FUN14 domain-containing protein 2 of Bos taurus (Bovine).